Here is a 364-residue protein sequence, read N- to C-terminus: D-alanine--D-alanine ligase (364 aa).

The 210-residue stretch at 145 to 354 folds into the ATP-grasp domain; sequence KMAFEQAGLP…FPELVDKLVQ (210 aa). Residue 181–236 participates in ATP binding; sequence EASLGYPCFVKPANLGSSVGISKVRSRQELEDALDNAANYDRRIIIEAGVAAREVE. Mg(2+)-binding residues include aspartate 307, glutamate 321, and asparagine 323.

Belongs to the D-alanine--D-alanine ligase family. Mg(2+) serves as cofactor. The cofactor is Mn(2+).

It localises to the cytoplasm. It catalyses the reaction 2 D-alanine + ATP = D-alanyl-D-alanine + ADP + phosphate + H(+). The protein operates within cell wall biogenesis; peptidoglycan biosynthesis. In terms of biological role, cell wall formation. The polypeptide is D-alanine--D-alanine ligase (Nostoc sp. (strain PCC 7120 / SAG 25.82 / UTEX 2576)).